The sequence spans 274 residues: MEFVKYQGLGNDFILIDCVKIKIDGLNALGKKLCDRHFGIGADGLIAVFPSASADYKIRIINSDGTEPEMCGNGIRCAMRFVFDYIKPQRKLTFETLAGPIKTELLAENLVKVDMGAPKLTAAQIPLNISDSDGRAVDIPVKLEGGKIKGTGVSMGNPHFVIFVEDIKKTDVAKTGKEVENNTAFPQKTNVEFVQVITPSRLCMKVWERGVGITLACGTGACASLVAGVLNNKTERLALVELDGGQLTVEWPDDGASVFMTGPATEVFSGVFKE.

Positions 11 and 62 each coordinate substrate. Cys71 serves as the catalytic Proton donor. Residues 72 to 73, Asn157, Asn190, and 208 to 209 contribute to the substrate site; these read GN and ER. The active-site Proton acceptor is the Cys217. 218 to 219 contributes to the substrate binding site; it reads GT.

Belongs to the diaminopimelate epimerase family. In terms of assembly, homodimer.

The protein resides in the cytoplasm. It carries out the reaction (2S,6S)-2,6-diaminopimelate = meso-2,6-diaminopimelate. The protein operates within amino-acid biosynthesis; L-lysine biosynthesis via DAP pathway; DL-2,6-diaminopimelate from LL-2,6-diaminopimelate: step 1/1. Functionally, catalyzes the stereoinversion of LL-2,6-diaminopimelate (L,L-DAP) to meso-diaminopimelate (meso-DAP), a precursor of L-lysine and an essential component of the bacterial peptidoglycan. This chain is Diaminopimelate epimerase, found in Elusimicrobium minutum (strain Pei191).